Here is a 359-residue protein sequence, read N- to C-terminus: Phospho-N-acetylmuramoyl-pentapeptide-transferase (359 aa).

A run of 10 helical transmembrane segments spans residues 24–44 (FRALIAVIVSFLITLVLSPIF), 72–92 (FVPSMGGLIIILSLELSSILL), 100–120 (TWIMAFTVFGFAIVGFIDDFV), 134–154 (MLGQIIVSFVSASLLYFVMHI), 170–190 (LGYFYIVFVMLILIATSNAVN), 197–217 (GLAIVPAMTTAFALGIISYVA), 234–254 (AGELAIFGMAVVGAGLGFLWF), 261–281 (MFMGDVGSLGLGAALGMLAIM), 289–309 (IIAGGVFVVEALSVIIQVSVF), and 336–356 (KIVVRIWIISILLAIFTIATL).

Belongs to the glycosyltransferase 4 family. MraY subfamily. Requires Mg(2+) as cofactor.

The protein resides in the cell inner membrane. It catalyses the reaction UDP-N-acetyl-alpha-D-muramoyl-L-alanyl-gamma-D-glutamyl-meso-2,6-diaminopimeloyl-D-alanyl-D-alanine + di-trans,octa-cis-undecaprenyl phosphate = di-trans,octa-cis-undecaprenyl diphospho-N-acetyl-alpha-D-muramoyl-L-alanyl-D-glutamyl-meso-2,6-diaminopimeloyl-D-alanyl-D-alanine + UMP. It participates in cell wall biogenesis; peptidoglycan biosynthesis. In terms of biological role, catalyzes the initial step of the lipid cycle reactions in the biosynthesis of the cell wall peptidoglycan: transfers peptidoglycan precursor phospho-MurNAc-pentapeptide from UDP-MurNAc-pentapeptide onto the lipid carrier undecaprenyl phosphate, yielding undecaprenyl-pyrophosphoryl-MurNAc-pentapeptide, known as lipid I. This chain is Phospho-N-acetylmuramoyl-pentapeptide-transferase, found in Hydrogenobaculum sp. (strain Y04AAS1).